Here is a 300-residue protein sequence, read N- to C-terminus: Haloalkane dehalogenase (300 aa).

One can recognise an AB hydrolase-1 domain in the interval A32–F155. The Nucleophile role is filled by D109. The active-site Proton donor is E133. The Proton acceptor role is filled by H273.

This sequence belongs to the haloalkane dehalogenase family. Type 2 subfamily. As to quaternary structure, monomer.

It catalyses the reaction 1-haloalkane + H2O = a halide anion + a primary alcohol + H(+). Functionally, catalyzes hydrolytic cleavage of carbon-halogen bonds in halogenated aliphatic compounds, leading to the formation of the corresponding primary alcohols, halide ions and protons. The protein is Haloalkane dehalogenase of Mycobacterium tuberculosis (strain ATCC 25177 / H37Ra).